The chain runs to 328 residues: Probable transcription factor At4g00610 (328 aa).

The disordered stretch occupies residues 31-143 (AKNKTLVTPS…ERAKTETETG (113 aa)). A compositionally biased stretch (polar residues) spans 35-54 (TLVTPSTVKKSSDVASTSKK). Acidic residues predominate over residues 84-108 (SEEEEEDEPSSDSESGSESESDTEA). Positions 122–143 (NEKRQSEGKPEEERAKTETETG) are enriched in basic and acidic residues.

It belongs to the GeBP family.

The chain is Probable transcription factor At4g00610 from Arabidopsis thaliana (Mouse-ear cress).